The sequence spans 225 residues: Transcription factor HES-7 (225 aa).

One can recognise a bHLH domain in the interval 12–69 (GPKMLKPLVEKRRRDRINRSLEELRLLLLERTRDQNLRNPKLEKAEILEFAVGYLRER). One can recognise an Orange domain in the interval 92 to 122 (YLSGFRECLLRLAAFAHDASPAARSQLFSAL). Residues 124 to 225 (GYRRPKPPRP…PPPAFWRPWP (102 aa)) are disordered. 2 stretches are compositionally biased toward pro residues: residues 140 to 149 (LPAPRPPLDP) and 213 to 225 (PSLP…RPWP). The WRPW motif motif lies at 221 to 224 (WRPW).

In terms of assembly, transcription repression requires formation of a complex with a corepressor protein of the Groucho/TLE family.

The protein localises to the nucleus. Functionally, transcriptional repressor. Represses transcription from both N box- and E box-containing promoters. May with HES1, cooperatively regulate somite formation in the presomitic mesoderm (PSM). May function as a segmentation clock, which is essential for coordinated somite segmentation. The polypeptide is Transcription factor HES-7 (Hes7) (Mus musculus (Mouse)).